Here is a 493-residue protein sequence, read N- to C-terminus: GPI alpha-1,6-mannosyltransferase 2 (493 aa).

The Cytoplasmic portion of the chain corresponds to M1–R13. The helical transmembrane segment at F14 to P34 threads the bilayer. The Lumenal portion of the chain corresponds to D35–H77. A helical transmembrane segment spans residues G78 to G98. The Cytoplasmic segment spans residues T99–S113. The chain crosses the membrane as a helical span at residues C114–L134. The Lumenal portion of the chain corresponds to H135–D136. Residues L137 to L157 traverse the membrane as a helical segment. Topologically, residues S158–N161 are cytoplasmic. A helical transmembrane segment spans residues V162 to G182. Residues Q183–S192 lie on the Lumenal side of the membrane. The helical transmembrane segment at V193 to L213 threads the bilayer. Residues M214 to L234 are Cytoplasmic-facing. A helical transmembrane segment spans residues F235–F255. The Lumenal portion of the chain corresponds to Q256–N327. The chain crosses the membrane as a helical span at residues F328–T348. At H349–Q378 the chain is on the cytoplasmic side. Residues V379–V399 form a helical membrane-spanning segment. The Lumenal portion of the chain corresponds to Q400 to R469. Residues Y470–L490 traverse the membrane as a helical segment. Topologically, residues P491–T493 are cytoplasmic.

Belongs to the PIGV family. Post-translationally, not N-glycosylated.

It is found in the endoplasmic reticulum membrane. It participates in glycolipid biosynthesis; glycosylphosphatidylinositol-anchor biosynthesis. Its function is as follows. Alpha-1,6-mannosyltransferase that catalyzes the transfer of the second mannose, via an alpha-1,6 bond, from a dolichol-phosphate-mannose (Dol-P-Man) to the alpha-D-Man-(1-&gt;4)-alpha-D-GlcN-(1-&gt;6)-(1-radyl,2-acyl-sn-glycero-3-phospho)-2-acyl-inositol (also termed H2) intermediate to generate an alpha-D-Man-(1-&gt;6)-alpha-D-Man-(1-&gt;4)-alpha-D-GlcN-(1-&gt;6)-(1-radyl,2-acyl-sn-glycero-3-phospho)-2-acyl-inositol (also termed H3) and participates in the seventh step of the glycosylphosphatidylinositol-anchor biosynthesis. Also transfers the second mannose on a 2-PEtn-alpha-D-Man-(1-&gt;4)-alpha-D-GlcN-(1-&gt;6)-(1-radyl,2-acyl-sn-glycero-3-phospho)-2-acyl-inositol (also termed H5). This Homo sapiens (Human) protein is GPI alpha-1,6-mannosyltransferase 2.